Consider the following 343-residue polypeptide: N-acetylornithine carbamoyltransferase (343 aa).

Carbamoyl phosphate-binding positions include 49–52, tryptophan 77, and arginine 112; that span reads SMRT. Glutamate 144 is a binding site for N(2)-acetyl-L-ornithine. Position 148 to 151 (148 to 151) interacts with carbamoyl phosphate; it reads HPCQ. N(2)-acetyl-L-ornithine contacts are provided by lysine 252 and leucine 295. Residue 294-295 coordinates carbamoyl phosphate; the sequence is CL. Lysine 302 bears the N6-carboxylysine mark. Arginine 322 contacts carbamoyl phosphate.

This sequence belongs to the aspartate/ornithine carbamoyltransferase superfamily. AOTCase family. As to quaternary structure, homotrimer.

It is found in the cytoplasm. It catalyses the reaction N(2)-acetyl-L-ornithine + carbamoyl phosphate = N(2)-acetyl-L-citrulline + phosphate + H(+). The protein operates within amino-acid biosynthesis; L-arginine biosynthesis. Its activity is regulated as follows. Carboxylation at Lys-302 increases the catalytic activity of the enzyme. Functionally, catalyzes the transfer of the carbamoyl group from carbamoyl phosphate to the delta-amino group of N(2)-acetyl-L-ornithine to produce N(2)-acetyl-L-citrulline. This is a step in an alternative arginine biosynthesis pathway. The enzyme has no activity with ornithine. This is N-acetylornithine carbamoyltransferase from Xanthomonas axonopodis pv. citri (strain 306).